The chain runs to 158 residues: Ribosome-binding factor A (158 aa).

Positions 114–158 are disordered; that stretch reads AKDAEVRQVSTGAQYAGDADPYRKPEDEDEETDGSSEKNEGPASA. The segment covering 148 to 158 has biased composition (basic and acidic residues); sequence SSEKNEGPASA.

Belongs to the RbfA family. In terms of assembly, monomer. Binds 30S ribosomal subunits, but not 50S ribosomal subunits or 70S ribosomes.

The protein resides in the cytoplasm. In terms of biological role, one of several proteins that assist in the late maturation steps of the functional core of the 30S ribosomal subunit. Associates with free 30S ribosomal subunits (but not with 30S subunits that are part of 70S ribosomes or polysomes). Required for efficient processing of 16S rRNA. May interact with the 5'-terminal helix region of 16S rRNA. This is Ribosome-binding factor A from Streptomyces griseus subsp. griseus (strain JCM 4626 / CBS 651.72 / NBRC 13350 / KCC S-0626 / ISP 5235).